Here is a 327-residue protein sequence, read N- to C-terminus: Probable cell division protein WhiA (327 aa).

The segment at residues 275–308 (SLEELGRLADPQMTKDAVAGRIRRLLTTADKRAR) is a DNA-binding region (H-T-H motif).

Belongs to the WhiA family.

Functionally, involved in cell division and chromosome segregation. The sequence is that of Probable cell division protein WhiA from Corynebacterium efficiens (strain DSM 44549 / YS-314 / AJ 12310 / JCM 11189 / NBRC 100395).